We begin with the raw amino-acid sequence, 829 residues long: Periplasmic nitrate reductase (829 aa).

A signal peptide (tat-type signal) is located at residues 1–30 (MKLSRRDFMKANAVAAAAAVAGVSAPTLAA). One can recognise a 4Fe-4S Mo/W bis-MGD-type domain in the interval 41–97 (ITWDKAPCRFCGTGCSVLVGSQDGRVVATQGDPDAPVNRGLNCIKGYFLSKIMYGQD). Residues Cys48, Cys51, Cys55, and Cys83 each coordinate [4Fe-4S] cluster. Residues Lys85, Gln152, Asn177, Cys181, 214 to 221 (WGSNMAEM), 245 to 249 (STFEH), 264 to 266 (QTD), Met374, Gln378, Asn484, 510 to 511 (SD), Lys533, Asp560, and 719 to 728 (TGRVLEHWHT) contribute to the Mo-bis(molybdopterin guanine dinucleotide) site. Phe795 is a substrate binding site. The Mo-bis(molybdopterin guanine dinucleotide) site is built by Asn803 and Lys820.

Belongs to the prokaryotic molybdopterin-containing oxidoreductase family. NasA/NapA/NarB subfamily. Component of the periplasmic nitrate reductase NapAB complex composed of NapA and NapB. [4Fe-4S] cluster serves as cofactor. The cofactor is Mo-bis(molybdopterin guanine dinucleotide). Post-translationally, predicted to be exported by the Tat system. The position of the signal peptide cleavage has not been experimentally proven.

Its subcellular location is the periplasm. It carries out the reaction 2 Fe(II)-[cytochrome] + nitrate + 2 H(+) = 2 Fe(III)-[cytochrome] + nitrite + H2O. Catalytic subunit of the periplasmic nitrate reductase complex NapAB. Receives electrons from NapB and catalyzes the reduction of nitrate to nitrite. The polypeptide is Periplasmic nitrate reductase (Aeromonas hydrophila subsp. hydrophila (strain ATCC 7966 / DSM 30187 / BCRC 13018 / CCUG 14551 / JCM 1027 / KCTC 2358 / NCIMB 9240 / NCTC 8049)).